The chain runs to 521 residues: Amidase 1 (521 aa).

Active-site charge relay system residues include Lys-112 and Ser-187. Residues Ser-187 and 208 to 211 each bind substrate; that span reads IGGS. Residue Ser-211 is the Acyl-ester intermediate of the active site.

It belongs to the amidase family.

The catalysed reaction is a monocarboxylic acid amide + H2O = a monocarboxylate + NH4(+). Its pathway is xenobiotic degradation. Its function is as follows. Amidase; part of the Fusarium detoxification of benzoxazolinone cluster 1 (FDB1) involved in the degradation of benzoxazolinones produced by the host plant. Maize, wheat, and rye produce the 2 benzoxazinone phytoanticipins 2,4-dihy-droxy-7-methoxy-1,4-benzoxazin-3-one (DIMBOA) and 2,4-dihydroxy-1,4-benzoxazin-3-one (DIBOA) that, due to their inherent instability once released, spontaneously degrade to the more stable corresponding benzoxazolinones, 6-methoxy-2-benzoxazolinone (MBOA) and 2-benzoxazolinone (BOA), respectively. The first step in the detoxification of benzoxazolinones involves the hydrolysis of the cyclic ester bond of benzoxazolinones by the FDB1 cluster gamma-lactamase MBL1 to aminophenols. MBL1 is able to convert BOA into 2-aminophenol (2-AP), as well as MBOA into 5-methoxy-2-aminophenol (2-AMP). The FDB2 cluster N-malonyltransferase FDB2/NAT1 then metabolizes aminophenols via N-malonylation to non-toxic malonamic acids. FDB2/NAT1 converts 2-AP into N-(2-hydroxyphenyl) malonamic acid (HPMA) and 2-AMP into N-(2-hydroxy-4-methoxyphenyl) malonamic acid (HMPMA). The duplicated dienlactone hydrolases DLH1 and DLH2 may provide redundant function for hydrolyzing the lactone moiety in the BOA molecule. The roles of the amidases an other enzymes encoded by the 2 FDB clusters have not been identified so far. The protein is Amidase 1 of Gibberella moniliformis (strain M3125 / FGSC 7600) (Maize ear and stalk rot fungus).